Here is a 61-residue protein sequence, read N- to C-terminus: Metallothionein-1 (61 aa).

M1 bears the N-acetylmethionine mark. Residues 1–29 (MDPNCSCSTGSTCTCSSSCGCKDCKCTSC) form a beta region. A divalent metal cation-binding residues include C5, C7, C13, C15, C19, C21, C24, C26, C29, C33, C34, C36, C37, C41, C44, C48, C50, C57, C59, and C60. The tract at residues 30–61 (KKSCCSCCPVGCSKCAQGCVCKGASDKCTCCA) is alpha.

It belongs to the metallothionein superfamily. Type 1 family.

Metallothioneins have a high content of cysteine residues that bind various heavy metals; these proteins are transcriptionally regulated by both heavy metals and glucocorticoids. The chain is Metallothionein-1 (MT1) from Cricetulus griseus (Chinese hamster).